The following is an 87-amino-acid chain: Large ribosomal subunit protein bL27 (87 aa).

It belongs to the bacterial ribosomal protein bL27 family.

The polypeptide is Large ribosomal subunit protein bL27 (Renibacterium salmoninarum (strain ATCC 33209 / DSM 20767 / JCM 11484 / NBRC 15589 / NCIMB 2235)).